The primary structure comprises 88 residues: Small ribosomal subunit protein bS20 (88 aa).

The tract at residues 1-27 (MANSKSAKKRALQSEKRRQHNASRRSM) is disordered.

This sequence belongs to the bacterial ribosomal protein bS20 family.

Binds directly to 16S ribosomal RNA. The protein is Small ribosomal subunit protein bS20 of Shewanella oneidensis (strain ATCC 700550 / JCM 31522 / CIP 106686 / LMG 19005 / NCIMB 14063 / MR-1).